The primary structure comprises 371 residues: Chaperone protein DnaJ (371 aa).

Positions 5–70 (DYYEVLGVNR…QKRAAYDQYG (66 aa)) constitute a J domain. Residues 31 to 52 (KYHPDRNPDNPKAEESFKEAKE) are disordered. The segment covering 32 to 52 (YHPDRNPDNPKAEESFKEAKE) has biased composition (basic and acidic residues). The CR-type zinc finger occupies 132-210 (RTETKIRIPV…CQGAGRVKKH (79 aa)). Cys-145, Cys-148, Cys-162, Cys-165, Cys-184, Cys-187, Cys-198, and Cys-201 together coordinate Zn(2+). CXXCXGXG motif repeat units follow at residues 145–152 (CETCHGSG), 162–169 (CTTCGGHG), 184–191 (CPKCHGSG), and 198–205 (CPSCQGAG).

It belongs to the DnaJ family. Homodimer. Zn(2+) serves as cofactor.

It localises to the cytoplasm. Functionally, participates actively in the response to hyperosmotic and heat shock by preventing the aggregation of stress-denatured proteins and by disaggregating proteins, also in an autonomous, DnaK-independent fashion. Unfolded proteins bind initially to DnaJ; upon interaction with the DnaJ-bound protein, DnaK hydrolyzes its bound ATP, resulting in the formation of a stable complex. GrpE releases ADP from DnaK; ATP binding to DnaK triggers the release of the substrate protein, thus completing the reaction cycle. Several rounds of ATP-dependent interactions between DnaJ, DnaK and GrpE are required for fully efficient folding. Also involved, together with DnaK and GrpE, in the DNA replication of plasmids through activation of initiation proteins. This chain is Chaperone protein DnaJ, found in Methylovorus sp. (strain SS1 / DSM 11726).